We begin with the raw amino-acid sequence, 1191 residues long: Phosphatidylinositol 3,4,5-trisphosphate 5-phosphatase 1 (1191 aa).

One can recognise an SH2 domain in the interval 8–104; it reads WNHGNITRSK…GLVTHLQYPV (97 aa). The tract at residues 122 to 148 is disordered; it reads SVMSPPELPPRNIPMSAGPSEAKDLPL. The SH3-binding 1 motif lies at 127 to 132; that stretch reads PELPPR. At serine 246 the chain carries Phosphoserine. Residues 915–918 carry the NPXY motif 1 motif; the sequence is NPNY. Position 918 is a phosphotyrosine (tyrosine 918). A Phosphoserine modification is found at serine 935. Residue tyrosine 945 is modified to Phosphotyrosine. Disordered regions lie at residues 947-994 and 1021-1191; these read QLPK…EARP and YGSV…TAMQ. A compositionally biased stretch (pro residues) spans 962 to 972; that stretch reads PPTPPSQPPLS. Position 964 is a phosphothreonine (threonine 964). 2 positions are modified to phosphoserine: serine 967 and serine 972. The SH3-binding 2 signature appears at 970 to 975; that stretch reads PLSPKK. The interval 1015–1029 is interaction with DAB2; it reads MFENPLYGSVSSFPK. The NPXY motif 2 motif lies at 1018–1021; that stretch reads NPLY. Tyrosine 1021 is subject to Phosphotyrosine. A compositionally biased stretch (basic and acidic residues) spans 1032–1046; sequence PRKEQESPKMLRKEP. The SH3-binding 3 motif lies at 1039–1050; the sequence is PKMLRKEPPPCP. A compositionally biased stretch (pro residues) spans 1141 to 1150; sequence IPAPRPPLPV. Basic and acidic residues predominate over residues 1162 to 1184; that stretch reads KGRDYRDNTELPHHGKHRQEEGL.

The protein belongs to the inositol 1,4,5-trisphosphate 5-phosphatase family. As to quaternary structure, interacts with tyrosine phosphorylated form of SHC1. Interacts with tyrosine phosphorylated form of DOK1. Interacts with tyrosine phosphorylated form of DOK3. Interacts with tyrosine phosphorylated form of SLAMF1/CD150. Interacts with PTPN11/SHP-2 in response to IL-3. Interacts with receptor EPOR. Interacts with receptors MS4A2/FCER1B and FCER1G. Interacts with receptors FCGR2B and FCGR3. Interacts with receptor FCGR2A, leading to regulate gene expression during the phagocytic process. Interacts with GRB2. Interacts with PLCG1. Interacts with tyrosine kinases SRC and TEC. Interacts with CRKL. Interacts with c-Met/MET. Interacts with MILR1 (tyrosine-phosphorylated). Isoform 5 interacts with IL6ST/gp130. Can weakly interact (via NPXY motif 2) with DAB2 (via PID domain); the interaction is impaired by tyrosine phosphorylation of the NPXY motif. Interacts (via SH2 domain) with tyrosine phosphorylated KLRC1 (via ITIM). Interacts with MPL/TPOR. Post-translationally, tyrosine phosphorylated by the members of the SRC family after exposure to a diverse array of extracellular stimuli such as cytokines, growth factors, antibodies, chemokines, integrin ligands and hypertonic and oxidative stress. Phosphorylated upon IgG receptor FCGR2B-binding. In terms of tissue distribution, specifically expressed in immune and hematopoietic cells. Levels vary considerably within this compartment. Lost during erythropoiesis when erythroid cells become Ter119+. Increases substantially with T-cell maturation and when resting B-cells are activated. Also present in mature granulocytes, monocyte/macrophages, mast cells and platelets. Isoform 5 is the only form expressed in embryonic stem (ES) cells and is coexpressed with other isoforms in hematopoietic stem cells, and disappears with differentiation.

The protein localises to the cytoplasm. It is found in the cell membrane. It localises to the membrane raft. Its subcellular location is the cytoskeleton. The enzyme catalyses a 1,2-diacyl-sn-glycero-3-phospho-(1D-myo-inositol-3,4,5-trisphosphate) + H2O = a 1,2-diacyl-sn-glycero-3-phospho-(1D-myo-inositol-3,4-bisphosphate) + phosphate. The catalysed reaction is a 1,2-diacyl-sn-glycero-3-phospho-(1D-myo-inositol-4,5-bisphosphate) + H2O = a 1,2-diacyl-sn-glycero-3-phospho-(1D-myo-inositol 4-phosphate) + phosphate. It carries out the reaction 1D-myo-inositol 1,3,4,5-tetrakisphosphate + H2O = 1D-myo-inositol 1,3,4-trisphosphate + phosphate. Its activity is regulated as follows. Activated upon translocation to the sites of synthesis of PtdIns(3,4,5)P3 in the membrane. Phosphatidylinositol (PtdIns) phosphatase that specifically hydrolyzes the 5-phosphate of phosphatidylinositol-3,4,5-trisphosphate (PtdIns(3,4,5)P3) to produce PtdIns(3,4)P2, thereby negatively regulating the PI3K (phosphoinositide 3-kinase) pathways. Also able to hydrolyze the 5-phosphate of phosphatidylinositol-4,5-bisphosphate (PtdIns(4,5)P3) and inositol 1,3,4,5-tetrakisphosphate. Acts as a negative regulator of B-cell antigen receptor signaling. Mediates signaling from the FC-gamma-RIIB receptor (FCGR2B), playing a central role in terminating signal transduction from activating immune/hematopoietic cell receptor systems. Acts as a negative regulator of myeloid cell proliferation/survival and chemotaxis, mast cell degranulation, immune cells homeostasis, integrin alpha-IIb/beta-3 signaling in platelets and JNK signaling in B-cells. Regulates proliferation of osteoclast precursors, macrophage programming, phagocytosis and activation and is required for endotoxin tolerance. Involved in the control of cell-cell junctions, CD32a signaling in neutrophils and modulation of EGF-induced phospholipase C activity. Key regulator of neutrophil migration, by governing the formation of the leading edge and polarization required for chemotaxis. Modulates FCGR3/CD16-mediated cytotoxicity in NK cells. Mediates the activin/TGF-beta-induced apoptosis through its Smad-dependent expression. The chain is Phosphatidylinositol 3,4,5-trisphosphate 5-phosphatase 1 (Inpp5d) from Mus musculus (Mouse).